The following is a 339-amino-acid chain: Methionine import ATP-binding protein MetN 2 (339 aa).

One can recognise an ABC transporter domain in the interval Ile-2–Val-241. Gly-38–Ser-45 serves as a coordination point for ATP.

Belongs to the ABC transporter superfamily. Methionine importer (TC 3.A.1.24) family. In terms of assembly, the complex is composed of two ATP-binding proteins (MetN), two transmembrane proteins (MetI) and a solute-binding protein (MetQ).

Its subcellular location is the cell membrane. The catalysed reaction is L-methionine(out) + ATP + H2O = L-methionine(in) + ADP + phosphate + H(+). It carries out the reaction D-methionine(out) + ATP + H2O = D-methionine(in) + ADP + phosphate + H(+). In terms of biological role, part of the ABC transporter complex MetNIQ involved in methionine import. Responsible for energy coupling to the transport system. The protein is Methionine import ATP-binding protein MetN 2 of Bacillus cereus (strain ZK / E33L).